The chain runs to 253 residues: Probable transcriptional regulatory protein RPR_05505 (253 aa).

The protein belongs to the TACO1 family.

The protein localises to the cytoplasm. The chain is Probable transcriptional regulatory protein RPR_05505 from Rickettsia peacockii (strain Rustic).